Reading from the N-terminus, the 106-residue chain is Probable NADP-dependent dehydrogenase in aabA 3'region (106 aa).

4–28 (LITGASSGFGWEAAKLCVAKGHRVI) contacts NADP(+).

Belongs to the short-chain dehydrogenases/reductases (SDR) family.

The protein is Probable NADP-dependent dehydrogenase in aabA 3'region of Dichelobacter nodosus (Bacteroides nodosus).